We begin with the raw amino-acid sequence, 374 residues long: Aclacinomycin 10-hydroxylase RdmB (374 aa).

Positions 171, 190, 213, 240, 241, and 255 each coordinate S-adenosyl-L-methionine.

It belongs to the class I-like SAM-binding methyltransferase superfamily. Cation-independent O-methyltransferase family. Homodimer. Homotetramer in solution. Tetramers might not be very stable in solution.

It carries out the reaction 15-demethylaclacinomycin T + AH2 + O2 = 10-decarboxymethylaclacinomycin T + A + CO2 + H2O. The catalysed reaction is 10-carboxy-13-deoxycarminomycin + AH2 + O2 + H(+) = 10-hydroxy-13-deoxycarminomycin + A + CO2 + H2O. The enzyme catalyses 10-hydroxy-13-deoxycarminomycin + S-adenosyl-L-methionine = 10-hydroxy-13-deoxydaunorubicin + S-adenosyl-L-homocysteine + H(+). It functions in the pathway antibiotic biosynthesis; rhodomycin biosynthesis. The protein operates within antibiotic biosynthesis; aclacinomycin biosynthesis. The hydroxylation reaction requires S-adenosyl-L-methionine (SAM) as a cofactor. S-adenosine-L-homocysteine and sinefungin (a SAM analog) can also support the decarboxylative hydroxylation activity with 10-carboxy-13-deoxycarminomycin as substrate. SAM and its analogs are considered an essential structural ligand to maintain ternary structural integrity and the proper binding mode and orientation of electron-rich substrates during decarboxylative hydroxylation of C-10 by RdmB. Its function is as follows. Involved in the biosynthesis of anthracyclines, an important group of aromatic polyketide antibiotics used in cancer chemotherapy. Acts as a 10-hydroxylase to catalyze a decarboxylative hydroxylation reaction on anthracyclines. During biosynthesis of rhodomycin, it catalyzes the removal of the carboxylic group at the C-10 position of 15-demethoxy-epsilon-rhodomycin coupled to hydroxylation at the same C-10 position to yield beta-rhodomycin. In vitro, can also catalyze the removal of the carboxylic group at the C-10 position of 15-demethoxyaclacinomycin T coupled to hydroxylation at the same C-10 position to yield 10-decarboxymethylaclacinomycin T. It can also use 10-carboxy-13-deoxycarminomycin, an analog of 15-demethoxy-epsilon-rhodomycin, to yield 10-hydroxy-13-deoxycarminomycin. In terms of biological role, in addition to its hydroxylation activity, it can act in vitro as a S-adenosyl-L-methionine-dependent O-methyltransferase and catalyze the 4-O-methylation of 10-hydroxy-13-deoxycarminomycin to 10-hydroxy-13-deoxydaunorubicin. The triglycosyl group of anthracyclines prevents the methylation reaction. The polypeptide is Aclacinomycin 10-hydroxylase RdmB (Streptomyces purpurascens).